We begin with the raw amino-acid sequence, 621 residues long: UvrABC system protein C (621 aa).

The region spanning 13 to 92 (EKPGVYLMKN…IKKYRPRYNI (80 aa)) is the GIY-YIG domain. The 36-residue stretch at 204-239 (NEVINDLKIKMEKASSELKFEEAASFRDKLLAVEKI) folds into the UVR domain.

The protein belongs to the UvrC family. As to quaternary structure, interacts with UvrB in an incision complex.

It localises to the cytoplasm. The UvrABC repair system catalyzes the recognition and processing of DNA lesions. UvrC both incises the 5' and 3' sides of the lesion. The N-terminal half is responsible for the 3' incision and the C-terminal half is responsible for the 5' incision. This is UvrABC system protein C from Clostridium novyi (strain NT).